Consider the following 157-residue polypeptide: uncharacterized protein (157 aa).

Disordered stretches follow at residues 76–105 (AINQELHLTPHKKTSPATSSSLKPRPGPRG) and 132–157 (VRAPSTKPSKTSSSNNPWPLTPRMRG). Positions 135–148 (PSTKPSKTSSSNNP) are enriched in low complexity.

To M.pneumoniae MPN_091 and MPN_413.

This is an uncharacterized protein from Mycoplasma pneumoniae (strain ATCC 29342 / M129 / Subtype 1) (Mycoplasmoides pneumoniae).